Consider the following 246-residue polypeptide: Auxin-responsive protein IAA25 (246 aa).

The tract at residues 1-22 is disordered; it reads MKSSSVAPRLKQERQDDCKFQE. Basic and acidic residues predominate over residues 10-22; sequence LKQERQDDCKFQE. The EAR-like (transcriptional repression) signature appears at 28 to 32; it reads LELRL. A PB1 domain is found at 143–238; that stretch reads TMFVKVNLEG…SVKRLYIAQD (96 aa).

Belongs to the Aux/IAA family. Homodimers and heterodimers. Highly expressed in flowers. Expressed in roots and seedlings.

The protein resides in the nucleus. In terms of biological role, aux/IAA proteins are short-lived transcriptional factors that function as repressors of early auxin response genes at low auxin concentrations. This Oryza sativa subsp. japonica (Rice) protein is Auxin-responsive protein IAA25 (IAA25).